The primary structure comprises 335 residues: Peroxidase 53 (335 aa).

The signal sequence occupies residues 1-30 (MAVTNLPTCDGLFIISLIVIVSSIFGTSSA). Glutamine 31 is modified (pyrrolidone carboxylic acid). Asparagine 33 and asparagine 43 each carry an N-linked (GlcNAc...) asparagine glycan. 4 disulfides stabilise this stretch: cysteine 41–cysteine 121, cysteine 74–cysteine 79, cysteine 127–cysteine 329, and cysteine 206–cysteine 238. The active-site Proton acceptor is histidine 72. Aspartate 73, valine 76, glycine 78, aspartate 80, and serine 82 together coordinate Ca(2+). Asparagine 165 carries N-linked (GlcNAc...) asparagine glycosylation. Proline 169 provides a ligand contact to substrate. Residue asparagine 177 is glycosylated (N-linked (GlcNAc...) asparagine). Residue histidine 199 coordinates heme b. Position 200 (threonine 200) interacts with Ca(2+). Asparagine 215, asparagine 227, and asparagine 241 each carry an N-linked (GlcNAc...) asparagine glycan. Ca(2+) contacts are provided by aspartate 251, threonine 254, and aspartate 259. Asparagine 297 carries an N-linked (GlcNAc...) asparagine glycan.

It belongs to the peroxidase family. Classical plant (class III) peroxidase subfamily. Ca(2+) is required as a cofactor. It depends on heme b as a cofactor. Mainly expressed in roots.

It is found in the secreted. It carries out the reaction 2 a phenolic donor + H2O2 = 2 a phenolic radical donor + 2 H2O. In terms of biological role, removal of H(2)O(2), oxidation of toxic reductants, biosynthesis and degradation of lignin, suberization, auxin catabolism, response to environmental stresses such as wounding, pathogen attack and oxidative stress. These functions might be dependent on each isozyme/isoform in each plant tissue. Functionally, closely linked to lignin formation by showing monolignol substrate specificity. The polypeptide is Peroxidase 53 (PER53) (Arabidopsis thaliana (Mouse-ear cress)).